Here is a 338-residue protein sequence, read N- to C-terminus: 2-methyl-6-phytyl-1,4-hydroquinone methyltransferase, chloroplastic (338 aa).

A chloroplast-targeting transit peptide spans 1-51 (MASLMLNGAITFPKGLGSPGSNLHARSIPRPTLLSVTRTSTPRLSVATRCS). At 52–307 (SSSVSSSRPS…VNNPFSFLGR (256 aa)) the chain is on the chloroplast intermembrane side. Residues 114–123 (VVDVGGGTGF) are SAM motif I. The SAM motif II stretch occupies residues 159–172 (CKIVEGDAEDLPFP). Positions 200 to 213 (RVLKIGGKACLIGP) are SAM motif III. Residues 308-328 (FLLGTLAAAWFVLIPIYMWIK) traverse the membrane as a helical segment. Residues 329 to 338 (DQIVPKDQPI) are Stromal-facing.

It belongs to the class I-like SAM-binding methyltransferase superfamily. MPBQ/MBSQ MT family.

The protein localises to the plastid. It is found in the chloroplast inner membrane. The enzyme catalyses 2-methyl-6-phytyl-1,4-benzene-1,4-diol + S-adenosyl-L-methionine = 2,3-dimethyl-6-phytylbenzene-1,4-diol + S-adenosyl-L-homocysteine + H(+). The catalysed reaction is 2-methyl-6-(all-trans-nonaprenyl)benzene-1,4-diol + S-adenosyl-L-methionine = plastoquinol-9 + S-adenosyl-L-homocysteine + H(+). It carries out the reaction 6-geranylgeranyl-2-methylbenzene-1,4-diol + S-adenosyl-L-methionine = 6-geranylgeranyl-2,3-dimethylbenzene-1,4-diol + S-adenosyl-L-homocysteine + H(+). Its pathway is cofactor biosynthesis; tocopherol biosynthesis. In terms of biological role, involved in a key methylation step in both tocopherols (vitamin E) and plastoquinone synthesis. Catalyzes the conversion of 2-methyl-6-phytyl-1,4-hydroquinone (MPBQ) to 2,3-dimethyl-6-phytyl-1,4-hydroquinone (DMPQ, a substrate for tocopherol cyclase), and 2-methyl-6-solanyl-1,4-benzoquinone (MSBQ) to plastoquinone. The protein is 2-methyl-6-phytyl-1,4-hydroquinone methyltransferase, chloroplastic (VTE3) of Arabidopsis thaliana (Mouse-ear cress).